A 151-amino-acid polypeptide reads, in one-letter code: Putative pre-16S rRNA nuclease (151 aa).

Belongs to the YqgF nuclease family.

The protein resides in the cytoplasm. Functionally, could be a nuclease involved in processing of the 5'-end of pre-16S rRNA. This chain is Putative pre-16S rRNA nuclease, found in Paraburkholderia phymatum (strain DSM 17167 / CIP 108236 / LMG 21445 / STM815) (Burkholderia phymatum).